The primary structure comprises 78 residues: Gas vesicle protein A (78 aa).

It belongs to the gas vesicle GvpA family. In terms of assembly, the gas vesicle shell is 2 nm thick and consists of a single layer of this protein. It forms helical ribs nearly perpendicular to the long axis of the vesicle.

It is found in the gas vesicle shell. Its function is as follows. Gas vesicles are hollow, gas filled proteinaceous nanostructures found in some microorganisms. During planktonic growth they allow positioning of the organism at a favorable depth for light or nutrient acquisition. GvpA forms the protein shell. This is Gas vesicle protein A from Halorubrum vacuolatum (Natronobacterium vacuolatum).